Reading from the N-terminus, the 156-residue chain is Ribosomal RNA large subunit methyltransferase H (156 aa).

Residues leucine 73, glycine 104, and 123–128 contribute to the S-adenosyl-L-methionine site; that span reads LSKLTL.

The protein belongs to the RNA methyltransferase RlmH family. In terms of assembly, homodimer.

The protein resides in the cytoplasm. It catalyses the reaction pseudouridine(1915) in 23S rRNA + S-adenosyl-L-methionine = N(3)-methylpseudouridine(1915) in 23S rRNA + S-adenosyl-L-homocysteine + H(+). Its function is as follows. Specifically methylates the pseudouridine at position 1915 (m3Psi1915) in 23S rRNA. The polypeptide is Ribosomal RNA large subunit methyltransferase H (Idiomarina loihiensis (strain ATCC BAA-735 / DSM 15497 / L2-TR)).